The chain runs to 571 residues: Alpha-1D adrenergic receptor (571 aa).

The Extracellular segment spans residues 1-94 (MTFRDLLSVN…AVGGLVVSAQ (94 aa)). The interval 13 to 75 (GSRSDGSAGG…SSAGEPGAAG (63 aa)) is disordered. The segment covering 19–34 (SAGGASAGGSGGGSGG) has biased composition (gly residues). Residues 35–47 (AAASEGRAVDGVP) show a composition bias toward low complexity. A compositionally biased stretch (gly residues) spans 48 to 57 (GTAGSGGVVG). Residues Asn64 and Asn81 are each glycosylated (N-linked (GlcNAc...) asparagine). The helical transmembrane segment at 95–120 (GVGVGVFLAAFILMAVAGNLLVILSV) threads the bilayer. Residues 121–132 (ACNRHLQTVTNY) are Cytoplasmic-facing. Residues 133–158 (FIVNLAVADLLLSATVLPFSATMEVL) form a helical membrane-spanning segment. Over 159-168 (GFWAFGRAFC) the chain is Extracellular. The chain crosses the membrane as a helical span at residues 169–191 (DVWAAVDVLCCTASILSLCTISV). Residues 192–212 (DRYVGVRHSLKYPSIMTERKA) lie on the Cytoplasmic side of the membrane. Residues 213 to 237 (AAILALLWAVAIVVSVGPLLGWKEP) form a helical membrane-spanning segment. Over 238 to 250 (VPPDERFCGITEE) the chain is Extracellular. Residues 251 to 274 (AGYAVFSSLCSFYLPMAVIVVMYC) traverse the membrane as a helical segment. Over 275 to 348 (RVYVVARSTT…KFSREKKAAK (74 aa)) the chain is Cytoplasmic. Residues 349–373 (TLAIVVGVFVLCWFPFFFVLPLGSL) form a helical membrane-spanning segment. The Extracellular portion of the chain corresponds to 374–380 (FPQLKPS). A helical membrane pass occupies residues 381–405 (EGVFKVIFWLGYFNSCVNPLIYPCS). Residues 406-571 (SREFKRAFLR…DYSHLRETDI (166 aa)) lie on the Cytoplasmic side of the membrane. The S-palmitoyl cysteine moiety is linked to residue Cys419. The tract at residues 465-487 (LPAPEATDTPSAPEAQAPVVGRR) is disordered.

The protein belongs to the G-protein coupled receptor 1 family. Adrenergic receptor subfamily. ADRA1D sub-subfamily. In terms of assembly, interacts with FLNA (via filamin repeat 21); increases PKA-mediated phosphorylation of FLNA. In terms of processing, palmitoylated. Palmitoylation by ZDHHC21 may increase the expression of the receptor and regulate downstream signaling.

It is found in the cell membrane. Functionally, this alpha-adrenergic receptor mediates its effect through the influx of extracellular calcium. The chain is Alpha-1D adrenergic receptor (ADRA1D) from Sus scrofa (Pig).